A 296-amino-acid polypeptide reads, in one-letter code: 33 kDa chaperonin (296 aa).

Intrachain disulfides connect C238/C240 and C271/C274.

This sequence belongs to the HSP33 family. Post-translationally, under oxidizing conditions two disulfide bonds are formed involving the reactive cysteines. Under reducing conditions zinc is bound to the reactive cysteines and the protein is inactive.

Its subcellular location is the cytoplasm. Functionally, redox regulated molecular chaperone. Protects both thermally unfolding and oxidatively damaged proteins from irreversible aggregation. Plays an important role in the bacterial defense system toward oxidative stress. This chain is 33 kDa chaperonin, found in Clostridium botulinum (strain ATCC 19397 / Type A).